The primary structure comprises 355 residues: Histidinol-phosphate aminotransferase (355 aa).

Lysine 218 is subject to N6-(pyridoxal phosphate)lysine.

This sequence belongs to the class-II pyridoxal-phosphate-dependent aminotransferase family. Histidinol-phosphate aminotransferase subfamily. In terms of assembly, homodimer. Pyridoxal 5'-phosphate is required as a cofactor.

The catalysed reaction is L-histidinol phosphate + 2-oxoglutarate = 3-(imidazol-4-yl)-2-oxopropyl phosphate + L-glutamate. It functions in the pathway amino-acid biosynthesis; L-histidine biosynthesis; L-histidine from 5-phospho-alpha-D-ribose 1-diphosphate: step 7/9. The chain is Histidinol-phosphate aminotransferase from Chlorobaculum parvum (strain DSM 263 / NCIMB 8327) (Chlorobium vibrioforme subsp. thiosulfatophilum).